Reading from the N-terminus, the 579-residue chain is Probable cytochrome c biosynthesis protein (579 aa).

It belongs to the CcmF/CycK/Ccl1/NrfE/CcsA family.

It localises to the mitochondrion. Functionally, could be involved in assembly and maturation of cytochromes c. May play a role in guidance of apocytochromes and heme groups for the covalent linkage introduced by the cytochrome-c-heme lyase. This is Probable cytochrome c biosynthesis protein from Daucus carota (Wild carrot).